The primary structure comprises 242 residues: Phosphoribosylaminoimidazole-succinocarboxamide synthase (242 aa).

The protein belongs to the SAICAR synthetase family.

It carries out the reaction 5-amino-1-(5-phospho-D-ribosyl)imidazole-4-carboxylate + L-aspartate + ATP = (2S)-2-[5-amino-1-(5-phospho-beta-D-ribosyl)imidazole-4-carboxamido]succinate + ADP + phosphate + 2 H(+). It functions in the pathway purine metabolism; IMP biosynthesis via de novo pathway; 5-amino-1-(5-phospho-D-ribosyl)imidazole-4-carboxamide from 5-amino-1-(5-phospho-D-ribosyl)imidazole-4-carboxylate: step 1/2. The polypeptide is Phosphoribosylaminoimidazole-succinocarboxamide synthase (Prochlorococcus marinus subsp. pastoris (strain CCMP1986 / NIES-2087 / MED4)).